The primary structure comprises 272 residues: Alcohol dehydrogenase-related 31 kDa protein (272 aa).

11-34 (YVADCGGIALETSKVLMTKNIAKL) serves as a coordination point for NAD(+). Substrate is bound at residue Ser-139. Tyr-152 functions as the Proton acceptor in the catalytic mechanism.

Belongs to the short-chain dehydrogenases/reductases (SDR) family.

This Drosophila teissieri (Fruit fly) protein is Alcohol dehydrogenase-related 31 kDa protein (Adhr).